Here is a 334-residue protein sequence, read N- to C-terminus: MDRPQNVKDLARKVKDNLSFSREVRGMDFEKEWDFMAIMRSFETMGFQGSNLYRAVEEIERMKNSKIFFGCTSNIISSGLRDVIATLVKRRHVHVLVITGGGIEEDIIKAFKPTFCADFRLDGAELRDNGLNRIGNLVIPSENYEHLESWLNNIVNDITEGYTAERPRILTPSSFIRILGERIDDESSILYWAAKNDIPVYSPAVVDGSLGDILSFHPRRKMLKLDIVEDVYRINCETIFCGETAAIILGCGVVKHHILNANLFKNGLEHCVLINNAQEFDGSDAGASLDEAVSWGKVKPGTRGVKVFGDATILFPLLVGATFMRKDKDVPKGE.

Residues 73-77 (SNIIS), 99-101 (TGG), Glu-105, and Asp-207 each bind NAD(+). 104-105 (EE) lines the spermidine pocket. Spermidine is bound by residues Asp-212 and His-256. Residue 276-277 (NA) participates in NAD(+) binding. Residues 282–284 (GSD) and 291–297 (EAVSWGK) each bind spermidine. The Nucleophile role is filled by Lys-297. 310 to 311 (DA) lines the NAD(+) pocket.

Belongs to the deoxyhypusine synthase family. The cofactor is NAD(+).

It catalyses the reaction [eIF5A protein]-L-lysine + spermidine = [eIF5A protein]-deoxyhypusine + propane-1,3-diamine. It functions in the pathway protein modification; eIF5A hypusination. Catalyzes the NAD-dependent oxidative cleavage of spermidine and the subsequent transfer of the butylamine moiety of spermidine to the epsilon-amino group of a specific lysine residue of the eIF-5A precursor protein to form the intermediate deoxyhypusine residue. The protein is Deoxyhypusine synthase (DYS1) of Encephalitozoon cuniculi (strain GB-M1) (Microsporidian parasite).